The chain runs to 333 residues: Biotin synthase (333 aa).

A Radical SAM core domain is found at 51–278; the sequence is RAIQLSTLMS…KSYVRLSAGR (228 aa). 3 residues coordinate [4Fe-4S] cluster: C66, C70, and C73. [2Fe-2S] cluster is bound by residues C110, C141, C201, and R273.

The protein belongs to the radical SAM superfamily. Biotin synthase family. As to quaternary structure, homodimer. The cofactor is [4Fe-4S] cluster. [2Fe-2S] cluster is required as a cofactor.

The enzyme catalyses (4R,5S)-dethiobiotin + (sulfur carrier)-SH + 2 reduced [2Fe-2S]-[ferredoxin] + 2 S-adenosyl-L-methionine = (sulfur carrier)-H + biotin + 2 5'-deoxyadenosine + 2 L-methionine + 2 oxidized [2Fe-2S]-[ferredoxin]. The protein operates within cofactor biosynthesis; biotin biosynthesis; biotin from 7,8-diaminononanoate: step 2/2. Its function is as follows. Catalyzes the conversion of dethiobiotin (DTB) to biotin by the insertion of a sulfur atom into dethiobiotin via a radical-based mechanism. The protein is Biotin synthase of Haemophilus influenzae (strain 86-028NP).